The following is a 261-amino-acid chain: Global transcriptional regulator CodY (261 aa).

Residues Met-1–Leu-159 are GAF domain. Residues Ala-207–Arg-226 constitute a DNA-binding region (H-T-H motif).

The protein belongs to the CodY family.

The protein resides in the cytoplasm. DNA-binding global transcriptional regulator which is involved in the adaptive response to starvation and acts by directly or indirectly controlling the expression of numerous genes in response to nutrient availability. During rapid exponential growth, CodY is highly active and represses genes whose products allow adaptation to nutrient depletion. This chain is Global transcriptional regulator CodY, found in Streptococcus agalactiae serotype III (strain NEM316).